The chain runs to 347 residues: NADH-quinone oxidoreductase subunit H (347 aa).

The next 9 membrane-spanning stretches (helical) occupy residues 13-33, 50-70, 82-102, 115-135, 161-181, 198-218, 248-268, 286-306, and 325-345; these read LIIA…VAYL, PNVV…KFVF, GVFL…WAVI, VGIL…IMGG, IGFV…TDIV, FLDW…ISAL, FLLF…LMTV, VPGI…FAMV, and VFLP…KVFG.

Belongs to the complex I subunit 1 family. NDH-1 is composed of 14 different subunits. Subunits NuoA, H, J, K, L, M, N constitute the membrane sector of the complex.

It is found in the cell inner membrane. The enzyme catalyses a quinone + NADH + 5 H(+)(in) = a quinol + NAD(+) + 4 H(+)(out). NDH-1 shuttles electrons from NADH, via FMN and iron-sulfur (Fe-S) centers, to quinones in the respiratory chain. The immediate electron acceptor for the enzyme in this species is believed to be ubiquinone. Couples the redox reaction to proton translocation (for every two electrons transferred, four hydrogen ions are translocated across the cytoplasmic membrane), and thus conserves the redox energy in a proton gradient. This subunit may bind ubiquinone. The protein is NADH-quinone oxidoreductase subunit H of Brucella abortus (strain 2308).